A 341-amino-acid polypeptide reads, in one-letter code: HTH-type sugar sensing transcriptional regulator TrmBL1 (341 aa).

Positions 32–53 form a DNA-binding region, H-T-H motif; sequence SKATDVTKESGIPHTRIYDVLS.

Belongs to the transcriptional regulator TrmB family. In terms of assembly, homotetramer. Forms homooctamers in the presence of maltotriose or maltose.

With respect to regulation, repressor activity is regulated by binding of different sugars to TrmBL1. Binding of maltose and maltotriose results in derepression of the target genes. However, high sugar concentration results in formation of octamers with high affinity for DNA, which may prevent transcription of target genes. Global transcriptional repressor of the maltodextrin transport gene cluster (mdxE operon) and most likely of all genes encoding glycolytic enzymes. Acts by binding to the conserved TGM (Thermococcales-Glycolytic-Motif) sequences in their promoter region. Can also interact with non-TGM sequences. The sequence is that of HTH-type sugar sensing transcriptional regulator TrmBL1 (trmBL1) from Pyrococcus furiosus (strain ATCC 43587 / DSM 3638 / JCM 8422 / Vc1).